Here is a 298-residue protein sequence, read N- to C-terminus: Cholesterol 25-hydroxylase (298 aa).

Residue asparagine 5 is glycosylated (N-linked (GlcNAc...) asparagine). Helical transmembrane passes span 38-58 (FFPVIFSIFTYLGFCLPFVVL), 84-104 (LLPCLGLTLYQHLVFVFPVTL), and 124-144 (LLSHVLICLLLFDTEIFAWHL). The 136-residue stretch at 128–263 (VLICLLLFDT…FTHWDKMLGT (136 aa)) folds into the Fatty acid hydroxylase domain. The short motif at 142-146 (WHLLH) is the Histidine box-1 element. The Histidine box-2 signature appears at 157-161 (HKVHH). N-linked (GlcNAc...) asparagine glycosylation occurs at asparagine 163. 2 consecutive transmembrane segments (helical) span residues 167-187 (FALATQYMSVWELLSLTFFDV) and 190-210 (VAMLQCHPLTILVFHVVNIWL). A Histidine box-3 motif is present at residues 238–244 (HHDLHHS).

This sequence belongs to the sterol desaturase family. Fe cation is required as a cofactor. In terms of processing, N-glycosylated. As to expression, expressed in testicular macrophages at all stages, with the highest level in 10 day old animals.

The protein resides in the endoplasmic reticulum membrane. It catalyses the reaction cholesterol + AH2 + O2 = 25-hydroxycholesterol + A + H2O. The enzyme catalyses cholesterol + NADPH + O2 + H(+) = 25-hydroxycholesterol + NADP(+) + H2O. Functionally, catalyzes the formation of 25-hydroxycholesterol from cholesterol, leading to repress cholesterol biosynthetic enzymes. Plays a key role in cell positioning and movement in lymphoid tissues: 25-hydroxycholesterol is an intermediate in biosynthesis of 7-alpha,25-dihydroxycholesterol (7-alpha,25-OHC), an oxysterol that acts as a ligand for the G protein-coupled receptor GPR183/EBI2, a chemotactic receptor for a number of lymphoid cells. May play an important role in regulating lipid metabolism by synthesizing a corepressor that blocks sterol regulatory element binding protein (SREBP) processing. In testis, production of 25-hydroxycholesterol by macrophages plays a role in Leydig cell differentiation. Required to restrain inflammation in macrophages: production of 25-hydroxycholesterol protects macrophages from cholesterol overload, thereby preventing mitochondrial DNA release and subsequent activation of the AIM2 inflammasome. Interferon-stimulated gene which has broad antiviral activities against a wide range of enveloped viruses. Its function is as follows. Catalyzes the formation of 25-hydroxycholesterol from cholesterol, leading to repress cholesterol biosynthetic enzymes. Plays a key role in cell positioning and movement in lymphoid tissues: 25-hydroxycholesterol is an intermediate in biosynthesis of 7-alpha,25-dihydroxycholesterol (7-alpha,25-OHC), an oxysterol that acts as a ligand for the G protein-coupled receptor GPR183/EBI2, a chemotactic receptor for a number of lymphoid cells. May play an important role in regulating lipid metabolism by synthesizing a corepressor that blocks sterol regulatory element binding protein (SREBP) processing. As an interferon-stimulated gene, has broad antiviral activities against a wide range of enveloped viruses. Its product, 25-hydroxycholesterol, activates the ER-localized enzyme ACAT to induce internalization of accessible cholesterol on the plasma membrane and restricts virus-host membranes fusion which inhibits virus replication. In testis, production of 25-hydroxycholesterol by macrophages plays a role in Leydig cell differentiation. This is Cholesterol 25-hydroxylase from Rattus norvegicus (Rat).